A 356-amino-acid polypeptide reads, in one-letter code: Delta(7)-sterol 5(6)-desaturase (356 aa).

3 helical membrane-spanning segments follow: residues 87–107 (LTLY…FAGL), 134–154 (QANI…LAEV), and 171–191 (WYDY…IYWI). A Fatty acid hydroxylase domain is found at 179–303 (FFIAFTDLCI…FTTLWDRLGG (125 aa)). The Histidine box-1 signature appears at 192-196 (HRGLH). Residues 205–209 (HKPHH) carry the Histidine box-2 motif. Residues 235–255 (YIFPFLFPLSKIASVAFFVFV) form a helical membrane-spanning segment. The Histidine box-3 motif lies at 280–284 (HTMHH).

Belongs to the sterol desaturase family. Fe cation serves as cofactor.

Its subcellular location is the endoplasmic reticulum membrane. It catalyses the reaction a Delta(7)-sterol + 2 Fe(II)-[cytochrome b5] + O2 + 2 H(+) = a Delta(5),Delta(7)-sterol + 2 Fe(III)-[cytochrome b5] + 2 H2O. The protein operates within steroid metabolism; ergosterol biosynthesis; ergosterol from zymosterol: step 3/5. Functionally, catalyzes the introduction of a C-5 double bond in the B ring of ergosterol. May contribute to the regulation of ergosterol biosynthesis. The sequence is that of Delta(7)-sterol 5(6)-desaturase (ERG3) from Leptosphaeria maculans (Blackleg fungus).